Reading from the N-terminus, the 185-residue chain is MLEQAPDEVQEIIEQGGVVAYPTEAVYGLGCDPDNDEAITRLLALKKRPWQKGLILVASDYQQLLPYIDESRLTNEQLNKVFVKWPGPFTFIMPIKPGLSNLLCGSFNSLAVRVSSHPTIQAICQRLGKPLVSTSANHAGEPPAMSCEEIIAKFDGEIDALISGSLGAERKPSTIVDAISGKVLR.

The region spanning 3-185 (EQAPDEVQEI…VDAISGKVLR (183 aa)) is the YrdC-like domain.

This sequence belongs to the SUA5 family. TsaC subfamily.

Its subcellular location is the cytoplasm. It carries out the reaction L-threonine + hydrogencarbonate + ATP = L-threonylcarbamoyladenylate + diphosphate + H2O. Required for the formation of a threonylcarbamoyl group on adenosine at position 37 (t(6)A37) in tRNAs that read codons beginning with adenine. Catalyzes the conversion of L-threonine, HCO(3)(-)/CO(2) and ATP to give threonylcarbamoyl-AMP (TC-AMP) as the acyladenylate intermediate, with the release of diphosphate. The protein is Threonylcarbamoyl-AMP synthase of Shewanella sediminis (strain HAW-EB3).